Reading from the N-terminus, the 288-residue chain is Polyamine aminopropyltransferase (288 aa).

The PABS domain maps to 9 to 238; the sequence is ETLHDQFGQY…GIMTFAWATD (230 aa). Residue Gln33 coordinates S-methyl-5'-thioadenosine. Positions 64 and 88 each coordinate spermidine. S-methyl-5'-thioadenosine contacts are provided by residues Glu108 and 140-141; that span reads DG. Catalysis depends on Asp158, which acts as the Proton acceptor. Residue 158-161 participates in spermidine binding; sequence DCTD. Residue Pro165 coordinates S-methyl-5'-thioadenosine.

The protein belongs to the spermidine/spermine synthase family. Homodimer or homotetramer.

It is found in the cytoplasm. The enzyme catalyses S-adenosyl 3-(methylsulfanyl)propylamine + putrescine = S-methyl-5'-thioadenosine + spermidine + H(+). It functions in the pathway amine and polyamine biosynthesis; spermidine biosynthesis; spermidine from putrescine: step 1/1. Functionally, catalyzes the irreversible transfer of a propylamine group from the amino donor S-adenosylmethioninamine (decarboxy-AdoMet) to putrescine (1,4-diaminobutane) to yield spermidine. The sequence is that of Polyamine aminopropyltransferase from Escherichia coli O17:K52:H18 (strain UMN026 / ExPEC).